Reading from the N-terminus, the 149-residue chain is Protein FAM72B (149 aa).

This sequence belongs to the FAM72 family.

The protein is Protein FAM72B (FAM72B) of Homo sapiens (Human).